A 213-amino-acid polypeptide reads, in one-letter code: Kynurenine formamidase (213 aa).

W18 serves as a coordination point for substrate. Zn(2+) contacts are provided by H48, H52, and D54. H58 functions as the Proton donor/acceptor in the catalytic mechanism. 2 residues coordinate Zn(2+): H160 and E172.

This sequence belongs to the Cyclase 1 superfamily. KynB family. In terms of assembly, homodimer. It depends on Zn(2+) as a cofactor.

It catalyses the reaction N-formyl-L-kynurenine + H2O = L-kynurenine + formate + H(+). It functions in the pathway amino-acid degradation; L-tryptophan degradation via kynurenine pathway; L-kynurenine from L-tryptophan: step 2/2. Its function is as follows. Catalyzes the hydrolysis of N-formyl-L-kynurenine to L-kynurenine, the second step in the kynurenine pathway of tryptophan degradation. This Burkholderia thailandensis (strain ATCC 700388 / DSM 13276 / CCUG 48851 / CIP 106301 / E264) protein is Kynurenine formamidase.